We begin with the raw amino-acid sequence, 145 residues long: Phospholipase A2, membrane associated (145 aa).

The signal sequence occupies residues 1–20 (MKLLLLLLVVMASDLPQAHG). Cystine bridges form between Cys46/Cys138, Cys48/Cys64, Cys63/Cys118, Cys69/Cys145, Cys70/Cys111, Cys79/Cys104, and Cys97/Cys109. 3 residues coordinate Ca(2+): His47, Gly49, and Gly51. His67 is a catalytic residue. Residue Asp68 coordinates Ca(2+). Asp112 is an active-site residue.

It belongs to the phospholipase A2 family. Requires Ca(2+) as cofactor. In terms of tissue distribution, alveolar macrophages, and at much lower levels in peripheral blood monocytes and peritoneal macrophages.

The protein resides in the secreted. It is found in the cell membrane. The protein localises to the mitochondrion outer membrane. It carries out the reaction a 1,2-diacyl-sn-glycero-3-phosphoethanolamine + H2O = a 1-acyl-sn-glycero-3-phosphoethanolamine + a fatty acid + H(+). The catalysed reaction is 1-hexadecanoyl-2-(9Z-octadecenoyl)-sn-glycero-3-phosphoethanolamine + H2O = 1-hexadecanoyl-sn-glycero-3-phosphoethanolamine + (9Z)-octadecenoate + H(+). It catalyses the reaction 1-hexadecanoyl-2-(9Z,12Z-octadecadienoyl)-sn-glycero-3-phosphoethanolamine + H2O = 1-hexadecanoyl-sn-glycero-3-phosphoethanolamine + (9Z,12Z)-octadecadienoate + H(+). The enzyme catalyses 1-hexadecanoyl-2-(5Z,8Z,11Z,14Z-eicosatetraenoyl)-sn-glycero-3-phosphoethanolamine + H2O = 1-hexadecanoyl-sn-glycero-3-phosphoethanolamine + (5Z,8Z,11Z,14Z)-eicosatetraenoate + H(+). It carries out the reaction N-hexadecanoyl-1,2-di-(9Z-octadecenoyl)-sn-glycero-3-phosphoethanolamine + H2O = N-hexadecanoyl-1-(9Z-octadecenoyl)-sn-glycero-3-phosphoethanolamine + (9Z)-octadecenoate + H(+). The catalysed reaction is 1,2-dihexadecanoyl-sn-glycero-3-phospho-(1'-sn-glycerol) + H2O = 1-hexadecanoyl-sn-glycero-3-phospho-(1'-sn-glycerol) + hexadecanoate + H(+). It catalyses the reaction 1-hexadecanoyl-2-(9Z-octadecenoyl)-sn-glycero-3-phosphoglycerol + H2O = 1-hexadecanoyl-sn-glycero-3-phosphoglycerol + (9Z)-octadecenoate + H(+). The enzyme catalyses 1-hexadecanoyl-2-(9Z-octadecenoyl)-sn-glycero-3-phospho-(1'-sn-glycerol) + H2O = 1-hexadecanoyl-sn-glycero-3-phospho-(1'-sn-glycerol) + (9Z)-octadecenoate + H(+). It carries out the reaction a 1,2-diacyl-sn-glycero-3-phosphocholine + H2O = a 1-acyl-sn-glycero-3-phosphocholine + a fatty acid + H(+). The catalysed reaction is 1,2-dihexadecanoyl-sn-glycero-3-phosphocholine + H2O = 1-hexadecanoyl-sn-glycero-3-phosphocholine + hexadecanoate + H(+). It catalyses the reaction 1-hexadecanoyl-2-(9Z-octadecenoyl)-sn-glycero-3-phosphocholine + H2O = 1-hexadecanoyl-sn-glycero-3-phosphocholine + (9Z)-octadecenoate + H(+). The enzyme catalyses 1-hexadecanoyl-2-(9Z,12Z-octadecadienoyl)-sn-glycero-3-phosphocholine + H2O = (9Z,12Z)-octadecadienoate + 1-hexadecanoyl-sn-glycero-3-phosphocholine + H(+). It carries out the reaction 1-hexadecanoyl-2-(4Z,7Z,10Z,13Z,16Z,19Z-docosahexaenoyl)-sn-glycero-3-phosphocholine + H2O = (4Z,7Z,10Z,13Z,16Z,19Z)-docosahexaenoate + 1-hexadecanoyl-sn-glycero-3-phosphocholine + H(+). Functionally, secretory calcium-dependent phospholipase A2 that primarily targets extracellular phospholipids with implications in host antimicrobial defense, inflammatory response and tissue regeneration. Hydrolyzes the ester bond of the fatty acyl group attached at sn-2 position of phospholipids (phospholipase A2 activity) with preference for phosphatidylethanolamines and phosphatidylglycerols over phosphatidylcholines. Contributes to lipid remodeling of cellular membranes and generation of lipid mediators involved in pathogen clearance. Displays bactericidal activity against Gram-positive bacteria by directly hydrolyzing phospholipids of the bacterial membrane. Upon sterile inflammation, targets membrane phospholipids of extracellular mitochondria released from activated platelets, generating free unsaturated fatty acids such as arachidonate that is used by neighboring leukocytes to synthesize inflammatory eicosanoids such as leukotrienes. Simultaneously, by compromising mitochondrial membrane integrity, promotes the release in circulation of potent damage-associated molecular pattern molecules that activate the innate immune response. Plays a stem cell regulator role in the intestinal crypt. Within intracellular compartment mediates Paneth cell differentiation and its stem cell supporting functions by inhibiting Wnt signaling pathway in intestinal stem cell (ICS). Secreted in the intestinal lumen upon inflammation, acts in an autocrine way and promotes prostaglandin E2 synthesis that stimulates Wnt signaling pathway in ICS cells and tissue regeneration. May play a role in the biosynthesis of N-acyl ethanolamines that regulate energy metabolism and inflammation. Hydrolyzes N-acyl phosphatidylethanolamines to N-acyl lysophosphatidylethanolamines, which are further cleaved by a lysophospholipase D to release N-acyl ethanolamines. Independent of its catalytic activity, acts as a ligand for integrins. Binds to and activates integrins ITGAV:ITGB3, ITGA4:ITGB1 and ITGA5:ITGB1. Binds to a site (site 2) which is distinct from the classical ligand-binding site (site 1) and induces integrin conformational changes and enhanced ligand binding to site 1. Induces cell proliferation in an integrin-dependent manner. In Cavia porcellus (Guinea pig), this protein is Phospholipase A2, membrane associated (PLA2G2A).